Reading from the N-terminus, the 127-residue chain is Cytochrome c' (127 aa).

Q1 carries the post-translational modification Pyrrolidone carboxylic acid. Residues R12, Q13, D67, C116, C119, and H120 each coordinate heme c.

Homodimer. Binds 1 heme c group covalently per subunit.

It localises to the periplasm. Its function is as follows. Cytochrome c' is the most widely occurring bacterial c-type cytochrome. Cytochromes c' are high-spin proteins and the heme has no sixth ligand. Their exact function is not known. The sequence is that of Cytochrome c' from Alcaligenes xylosoxydans xylosoxydans (Achromobacter xylosoxidans).